Here is a 2890-residue protein sequence, read N- to C-terminus: Bifunctional DNA-directed RNA polymerase subunit beta-beta' (2890 aa).

The interval 1-1377 (MSKKIPLKNR…DINIFGDEMD (1377 aa)) is DNA-directed RNA polymerase subunit beta. A DNA-directed RNA polymerase subunit beta' region spans residues 1384-2890 (PIVIKEDDRP…LRTIEDSPKI (1507 aa)). Residues Cys-1449, Cys-1451, Cys-1465, and Cys-1468 each contribute to the Zn(2+) site. 3 residues coordinate Mg(2+): Asp-1849, Asp-1851, and Asp-1853. Zn(2+)-binding residues include Cys-2179, Cys-2253, Cys-2260, and Cys-2263.

In the N-terminal section; belongs to the RNA polymerase beta chain family. It in the C-terminal section; belongs to the RNA polymerase beta' chain family. The RNAP catalytic core consists of 2 alpha, 1 beta/beta' and 1 omega subunit. When a sigma factor is associated with the core the holoenzyme is formed, which can initiate transcription. It depends on Mg(2+) as a cofactor. Zn(2+) is required as a cofactor.

The catalysed reaction is RNA(n) + a ribonucleoside 5'-triphosphate = RNA(n+1) + diphosphate. Functionally, DNA-dependent RNA polymerase catalyzes the transcription of DNA into RNA using the four ribonucleoside triphosphates as substrates. The polypeptide is Bifunctional DNA-directed RNA polymerase subunit beta-beta' (rpoBC) (Helicobacter acinonychis (strain Sheeba)).